Consider the following 596-residue polypeptide: Protein FlbA (596 aa).

4 TPR repeats span residues 91-124, 159-192, 193-226, and 228-260; these read GLAWHILAIAREKTGDFASSLRAYEAALALLPDH, VEGANNLACALRELNRESEAIEVLKAALGANPEA, AVLWNTLGTVLCNIGDAAGSIVFFDESLRLAPDF, and KAYHNRAFARLDLGEIEAALADCEAAMRSPGSP.

This Caulobacter vibrioides (strain ATCC 19089 / CIP 103742 / CB 15) (Caulobacter crescentus) protein is Protein FlbA (flbA).